Consider the following 261-residue polypeptide: MAHQAHAYHMVDPSPWPLTGAIGALFLTSGLAIWFHFQSVTLLTLGLILLLLTMYQWWRDIIREGTFQGHHTPPVQKGLRYGMILFITSEVFFFLGFFWAFYHSSLAPTPELGGCWPPTGITPLDPFEVPLLNTAVLLASGVTVTWAHHSLMEGARKQAIQALALTIILGVYFTALQAMEYYEAPFTIADGVYGSTFFVATGFHGLHVIIGSSFLAVCLLRQIQYHFTSEHHFGFEAAAWYWHFVDVVWLFLYVSIYWWGS.

At Met-1–Pro-15 the chain is on the mitochondrial matrix side. A helical membrane pass occupies residues Trp-16–Trp-34. The Mitochondrial intermembrane portion of the chain corresponds to Phe-35 to Val-40. The helical transmembrane segment at Thr-41–Thr-66 threads the bilayer. The Mitochondrial matrix portion of the chain corresponds to Phe-67–Thr-72. The helical transmembrane segment at Pro-73–Ser-105 threads the bilayer. Topologically, residues Leu-106 to Glu-128 are mitochondrial intermembrane. A helical transmembrane segment spans residues Val-129–Met-152. Residues Glu-153–Ala-155 are Mitochondrial matrix-facing. A helical membrane pass occupies residues Arg-156 to Glu-183. The Mitochondrial intermembrane portion of the chain corresponds to Ala-184–Asp-190. Residues Gly-191–Ile-223 traverse the membrane as a helical segment. Residues Gln-224–His-232 are Mitochondrial matrix-facing. Residues Phe-233 to Ile-256 form a helical membrane-spanning segment. At Tyr-257 to Ser-261 the chain is on the mitochondrial intermembrane side.

This sequence belongs to the cytochrome c oxidase subunit 3 family. In terms of assembly, component of the cytochrome c oxidase (complex IV, CIV), a multisubunit enzyme composed of 14 subunits. The complex is composed of a catalytic core of 3 subunits MT-CO1, MT-CO2 and MT-CO3, encoded in the mitochondrial DNA, and 11 supernumerary subunits COX4I, COX5A, COX5B, COX6A, COX6B, COX6C, COX7A, COX7B, COX7C, COX8 and NDUFA4, which are encoded in the nuclear genome. The complex exists as a monomer or a dimer and forms supercomplexes (SCs) in the inner mitochondrial membrane with NADH-ubiquinone oxidoreductase (complex I, CI) and ubiquinol-cytochrome c oxidoreductase (cytochrome b-c1 complex, complex III, CIII), resulting in different assemblies (supercomplex SCI(1)III(2)IV(1) and megacomplex MCI(2)III(2)IV(2)).

The protein localises to the mitochondrion inner membrane. The enzyme catalyses 4 Fe(II)-[cytochrome c] + O2 + 8 H(+)(in) = 4 Fe(III)-[cytochrome c] + 2 H2O + 4 H(+)(out). In terms of biological role, component of the cytochrome c oxidase, the last enzyme in the mitochondrial electron transport chain which drives oxidative phosphorylation. The respiratory chain contains 3 multisubunit complexes succinate dehydrogenase (complex II, CII), ubiquinol-cytochrome c oxidoreductase (cytochrome b-c1 complex, complex III, CIII) and cytochrome c oxidase (complex IV, CIV), that cooperate to transfer electrons derived from NADH and succinate to molecular oxygen, creating an electrochemical gradient over the inner membrane that drives transmembrane transport and the ATP synthase. Cytochrome c oxidase is the component of the respiratory chain that catalyzes the reduction of oxygen to water. Electrons originating from reduced cytochrome c in the intermembrane space (IMS) are transferred via the dinuclear copper A center (CU(A)) of subunit 2 and heme A of subunit 1 to the active site in subunit 1, a binuclear center (BNC) formed by heme A3 and copper B (CU(B)). The BNC reduces molecular oxygen to 2 water molecules using 4 electrons from cytochrome c in the IMS and 4 protons from the mitochondrial matrix. This Formosania lacustris (Oriental stream loach) protein is Cytochrome c oxidase subunit 3 (mt-co3).